The following is a 205-amino-acid chain: Melanocortin-2 receptor accessory protein 2 (205 aa).

Asn-9 carries N-linked (GlcNAc...) asparagine glycosylation. The chain crosses the membrane as a helical span at residues Ile-45–Thr-65. Ser-89 carries the phosphoserine modification.

This sequence belongs to the MRAP family. Homodimer and heterodimer. Forms antiparallel homodimers and heterodimers with MRAP. Interacts with MC1R, MC2R, MC3R, MC4R and MC5R. Expressed in the adrenal gland and brain. Not expressed in other tissues.

The protein localises to the cell membrane. The protein resides in the endoplasmic reticulum membrane. Functionally, modulator of melanocortin receptor 4 (MC4R), a receptor involved in energy homeostasis. Plays a central role in the control of energy homeostasis and body weight regulation by increasing ligand-sensitivity of MC4R and MC4R-mediated generation of cAMP. May also act as a negative regulator of MC2R: competes with MRAP for binding to MC2R and impairs the binding of corticotropin (ACTH) to MC2R. May also regulate activity of other melanocortin receptors (MC1R, MC3R and MC5R); however, additional evidence is required in vivo. The chain is Melanocortin-2 receptor accessory protein 2 (MRAP2) from Homo sapiens (Human).